The following is a 526-amino-acid chain: MNGSKNGTAVANSTNGLDDNGLMVLESVSIIIIAILACLGNLVIVVTLYKKPYLLTPSNKFVFSLTSSNLLLSVLMLPFVVASSVRRDWMFGVVWCNFTALLHLLVSSSSMLTLGAIAIDRYYAVLYPMIYPMKITGNRAVLAIVYIWLHSLVGCLPPLFGWSSFEFDRFKWTCTVSWHKEISYTAFWVTWCCLLPLVAMLVCYGVIFRVARIKARKVYCGSVVVSQEESSSQNNGRKNSNTSTSSSGSRKSLIYSGSQCKAFITILVVLGTFLTTWGPYVVVISTEALLGKNSVSPQVETLVSWLSFTSAVCHPLIYGLWNKTVRKELLGMCFDDRYYRESFVIRHRTSRLFSISNRITDLGMSPHLTAMLVGGGQLLGRGSSTGDTGFSYTQDSATDVMLLESYTSEASHSAHCTANKRRSSVTFEDQVDHIPQGDPSVVQVTADIHKSLDSFASSLAKAIENDAKLQLLGEWTQIPTSLFTVRNTQRVPRYLDGQRLRMESIDEGIVKDDDDDEEEMEREEKM.

Residues 1–27 (MNGSKNGTAVANSTNGLDDNGLMVLES) lie on the Extracellular side of the membrane. N-linked (GlcNAc...) asparagine glycosylation is found at Asn-2, Asn-6, and Asn-12. The helical transmembrane segment at 28 to 48 (VSIIIIAILACLGNLVIVVTL) threads the bilayer. The Cytoplasmic portion of the chain corresponds to 49–60 (YKKPYLLTPSNK). A helical membrane pass occupies residues 61 to 81 (FVFSLTSSNLLLSVLMLPFVV). Residues 82 to 98 (ASSVRRDWMFGVVWCNF) lie on the Extracellular side of the membrane. A disulfide bridge links Cys-96 with Cys-174. The N-linked (GlcNAc...) asparagine glycan is linked to Asn-97. The chain crosses the membrane as a helical span at residues 99-119 (TALLHLLVSSSSMLTLGAIAI). The Cytoplasmic portion of the chain corresponds to 120-139 (DRYYAVLYPMIYPMKITGNR). The chain crosses the membrane as a helical span at residues 140–160 (AVLAIVYIWLHSLVGCLPPLF). The Extracellular segment spans residues 161–186 (GWSSFEFDRFKWTCTVSWHKEISYTA). The chain crosses the membrane as a helical span at residues 187–207 (FWVTWCCLLPLVAMLVCYGVI). The Cytoplasmic portion of the chain corresponds to 208–263 (FRVARIKARKVYCGSVVVSQEESSSQNNGRKNSNTSTSSSGSRKSLIYSGSQCKAF). The tract at residues 231–250 (SSQNNGRKNSNTSTSSSGSR) is disordered. The helical transmembrane segment at 264 to 284 (ITILVVLGTFLTTWGPYVVVI) threads the bilayer. Topologically, residues 285 to 300 (STEALLGKNSVSPQVE) are extracellular. Residues 301–321 (TLVSWLSFTSAVCHPLIYGLW) form a helical membrane-spanning segment. The Cytoplasmic portion of the chain corresponds to 322–526 (NKTVRKELLG…EEEMEREEKM (205 aa)). Residues 505-526 (IDEGIVKDDDDDEEEMEREEKM) are disordered. The segment covering 512–526 (DDDDDEEEMEREEKM) has biased composition (acidic residues).

The protein belongs to the G-protein coupled receptor 1 family.

It localises to the cell projection. It is found in the cilium membrane. The protein localises to the cell membrane. Its function is as follows. Key negative regulator of Shh signaling during neural tube development. Recruited to primary cilia and acts as a regulator of the PKA-dependent basal repression machinery in Shh signaling by increasing cAMP levels, leading to promote the PKA-dependent processing of gli3 into gli3r and repress the Shh signaling. In presence of shh, it is removed from primary cilia, preventing its activity and allowing activation of the Shh signaling. Required in left/right patterning by modulating Ca(2+) levels in the cells surrounding the Kupffer vesicle. This is G-protein coupled receptor 161 (gpr161) from Danio rerio (Zebrafish).